Reading from the N-terminus, the 155-residue chain is Protein FAM201A (155 aa).

The interval 130 to 155 (QDQGCGQHRPHSPRLVDIALPGGGWT) is disordered.

In Homo sapiens (Human), this protein is Protein FAM201A (FAM201A).